We begin with the raw amino-acid sequence, 79 residues long: Large ribosomal subunit protein bL31 (79 aa).

The protein belongs to the bacterial ribosomal protein bL31 family. Type A subfamily. As to quaternary structure, part of the 50S ribosomal subunit.

Its function is as follows. Binds the 23S rRNA. This chain is Large ribosomal subunit protein bL31, found in Trichormus variabilis (strain ATCC 29413 / PCC 7937) (Anabaena variabilis).